Consider the following 814-residue polypeptide: MALGPFVLPFRGDQYSFGINFKSSPEEKLNFDLSCVAFDVKGQLHDTLHARKPTALDGALVKGFEKQALPEETVQVEGDDVIYMFPKKFERQVEVLLFVASAPSIPGKKHDLDSSSKLEFAVSYSDVGGQAFNQSFDLKPLAAQGGVSSIIVAVMYLQAEGGWTLRSVGDCHPFDSPGLIVPELKQTILNLRDHHGVQLDAADAIQAIDPAERVPVTRQFQDQSLDEASAGRAAEPAPVKKLRIDLSWTFWPPPPPTEEGEEPPEEPALEYNLVMYNKDGEEVQSISTGNREATGARAGRPEPEEDEEEEKEEEKEEPEEGEEGEEGEGGEPKEPPPPPPAPKVDPYEFKERDVIYLDVPDLPAEVRSMVLLVTNYDEENGFTRVRTVRCRLVDVSNGEAPLPGSKAAVAAAAAAAEQGLAAPPNPERVLADYGVLSKYEDDKATTQVALMKLYKEYADSAFNVFRGAGVDNVAAFIGQEPDTIINQLKAYLEATKKQKAAEAAAAAAAEESGEEITADPKPHVWRFRALGLNFGGDSLEAIEHDLKNLFAFDGDLAPGAARDSDTSRSSFPNGDTYFGSYADDVKHGPGLYAFATGAGYAGEYAGGKRHGRGVMVFPDGGTYVGEFVADKFEGQGQYRYPDGSVYTGSWAAGQKHGPGVYWDTARGCLRGEWKKGLLVGKGTYEQPALRFEGEFVRGMPAGTATYTLTGHRTLDMPCFAAQHIQAEEGPTLALPCAYGIPPGSGDEPQLDEEGQPIEDTDKPPLPAHPKYEGLTFTAEQLPGAAPDTVFPPEEGKPVPITAVPAFSVSTGLVA.

Arg-243 is subject to Asymmetric dimethylarginine. The segment at Val-283–Pro-346 is disordered. The span at Pro-303–Gly-329 shows a compositional bias: acidic residues. Arg-428 is modified (asymmetric dimethylarginine). MORN repeat units lie at residues Tyr-577–Gly-597, Tyr-600–Thr-622, Tyr-623–Val-645, Tyr-646–Trp-662, Gly-671–Glu-685, and Phe-691–Thr-707. Residues Gly-739–Pro-769 are disordered. Residues Pro-748–Glu-758 are compositionally biased toward acidic residues.

Asymmetrically dimethylated at Arg-243 and Arg-428 during flagellum resorption. Probably methylated by PRMT1.

It is found in the cytoplasm. The protein localises to the cytoskeleton. Its subcellular location is the flagellum axoneme. In terms of biological role, flagellar radial spokes contribute to the regulation of dynein arm activity and thus the pattern of flagellar bending. They consist of a thin stalk, which is attached to the a subfiber of the outer doublet microtubule, and a bulbous head, which is attached to the stalk and appears to interact with the projections from the central pair of microtubules. This is Flagellar radial spoke protein 1 from Chlamydomonas reinhardtii (Chlamydomonas smithii).